Consider the following 213-residue polypeptide: Adenylate kinase (213 aa).

10–15 (GCGKGT) is an ATP binding site. The interval 30 to 59 (STGDLMRKEISLNTRLGLKCQEYMNAGKYV) is NMP. AMP-binding positions include threonine 31, arginine 36, 57-59 (KYV), 83-86 (GYPR), and glutamine 90. The segment at 124–161 (NRLVCPLCKASFNLETRKPKQEGLCDFDNTKLVKRSDD) is LID. Arginine 125 contacts ATP. Residues cysteine 128 and cysteine 131 each coordinate Zn(2+). 134–135 (SF) serves as a coordination point for ATP. Residues cysteine 148 and aspartate 151 each contribute to the Zn(2+) site. 2 residues coordinate AMP: arginine 158 and arginine 169. Position 197 (aspartate 197) interacts with ATP.

The protein belongs to the adenylate kinase family. Monomer.

The protein localises to the cytoplasm. The enzyme catalyses AMP + ATP = 2 ADP. Its pathway is purine metabolism; AMP biosynthesis via salvage pathway; AMP from ADP: step 1/1. Catalyzes the reversible transfer of the terminal phosphate group between ATP and AMP. Plays an important role in cellular energy homeostasis and in adenine nucleotide metabolism. This Mycoplasma mycoides subsp. mycoides SC (strain CCUG 32753 / NCTC 10114 / PG1) protein is Adenylate kinase.